Reading from the N-terminus, the 964-residue chain is Glycine dehydrogenase (decarboxylating) (964 aa).

Over residues 1-10 (MNSTLQNRNR) the composition is skewed to polar residues. The tract at residues 1–25 (MNSTLQNRNRTNLERVSTDPLDTFP) is disordered. Residue lysine 713 is modified to N6-(pyridoxal phosphate)lysine.

The protein belongs to the GcvP family. As to quaternary structure, the glycine cleavage system is composed of four proteins: P, T, L and H. Pyridoxal 5'-phosphate is required as a cofactor.

It carries out the reaction N(6)-[(R)-lipoyl]-L-lysyl-[glycine-cleavage complex H protein] + glycine + H(+) = N(6)-[(R)-S(8)-aminomethyldihydrolipoyl]-L-lysyl-[glycine-cleavage complex H protein] + CO2. Functionally, the glycine cleavage system catalyzes the degradation of glycine. The P protein binds the alpha-amino group of glycine through its pyridoxal phosphate cofactor; CO(2) is released and the remaining methylamine moiety is then transferred to the lipoamide cofactor of the H protein. The polypeptide is Glycine dehydrogenase (decarboxylating) (Leptospira borgpetersenii serovar Hardjo-bovis (strain JB197)).